Consider the following 47-residue polypeptide: Large ribosomal subunit protein bL34 (47 aa).

Belongs to the bacterial ribosomal protein bL34 family.

The sequence is that of Large ribosomal subunit protein bL34 from Mycolicibacterium vanbaalenii (strain DSM 7251 / JCM 13017 / BCRC 16820 / KCTC 9966 / NRRL B-24157 / PYR-1) (Mycobacterium vanbaalenii).